Here is a 446-residue protein sequence, read N- to C-terminus: Ubiquitin carboxyl-terminal hydrolase MINDY-3 (446 aa).

C51 (nucleophile) is an active-site residue. The span at 117–128 (DNSDITDSHPEP) shows a compositional bias: basic and acidic residues. The segment at 117–137 (DNSDITDSHPEPESSQPTDTP) is disordered. H288 acts as the Proton acceptor in catalysis.

The protein belongs to the MINDY deubiquitinase family. FAM188 subfamily.

The protein localises to the nucleus. The enzyme catalyses Thiol-dependent hydrolysis of ester, thioester, amide, peptide and isopeptide bonds formed by the C-terminal Gly of ubiquitin (a 76-residue protein attached to proteins as an intracellular targeting signal).. Hydrolase that can remove 'Lys-48'-linked conjugated ubiquitin from proteins. The protein is Ubiquitin carboxyl-terminal hydrolase MINDY-3 (mindy3) of Danio rerio (Zebrafish).